An 80-amino-acid polypeptide reads, in one-letter code: Cell division protein ZapB (80 aa).

Residues 3–80 (LEILEQLEAK…GLLGKMDEVE (78 aa)) adopt a coiled-coil conformation. Residues 41 to 60 (LEQANNGRSEVEQEAQRARD) are disordered. Over residues 49–60 (SEVEQEAQRARD) the composition is skewed to basic and acidic residues.

Belongs to the ZapB family. In terms of assembly, homodimer. The ends of the coiled-coil dimer bind to each other, forming polymers. Interacts with FtsZ.

The protein localises to the cytoplasm. Its function is as follows. Non-essential, abundant cell division factor that is required for proper Z-ring formation. It is recruited early to the divisome by direct interaction with FtsZ, stimulating Z-ring assembly and thereby promoting cell division earlier in the cell cycle. Its recruitment to the Z-ring requires functional FtsA or ZipA. This chain is Cell division protein ZapB, found in Aliivibrio fischeri (strain ATCC 700601 / ES114) (Vibrio fischeri).